The sequence spans 327 residues: Lipoyl synthase (327 aa).

Residues Cys-74, Cys-79, Cys-85, Cys-100, Cys-104, Cys-107, and Ser-314 each coordinate [4Fe-4S] cluster. A Radical SAM core domain is found at 86–303 (FSGGTATFMI…AEEGEKMGFK (218 aa)).

Belongs to the radical SAM superfamily. Lipoyl synthase family. It depends on [4Fe-4S] cluster as a cofactor.

Its subcellular location is the cytoplasm. The enzyme catalyses [[Fe-S] cluster scaffold protein carrying a second [4Fe-4S](2+) cluster] + N(6)-octanoyl-L-lysyl-[protein] + 2 oxidized [2Fe-2S]-[ferredoxin] + 2 S-adenosyl-L-methionine + 4 H(+) = [[Fe-S] cluster scaffold protein] + N(6)-[(R)-dihydrolipoyl]-L-lysyl-[protein] + 4 Fe(3+) + 2 hydrogen sulfide + 2 5'-deoxyadenosine + 2 L-methionine + 2 reduced [2Fe-2S]-[ferredoxin]. The protein operates within protein modification; protein lipoylation via endogenous pathway; protein N(6)-(lipoyl)lysine from octanoyl-[acyl-carrier-protein]: step 2/2. In terms of biological role, catalyzes the radical-mediated insertion of two sulfur atoms into the C-6 and C-8 positions of the octanoyl moiety bound to the lipoyl domains of lipoate-dependent enzymes, thereby converting the octanoylated domains into lipoylated derivatives. The chain is Lipoyl synthase from Pseudomonas aeruginosa (strain LESB58).